A 227-amino-acid chain; its full sequence is Cytochrome c oxidase subunit 2 (227 aa).

Topologically, residues 1–14 are mitochondrial intermembrane; sequence MAYPMQLGFQDATS. The helical transmembrane segment at 15-45 threads the bilayer; the sequence is PIMEELLHFHDHTLMIVFLISSLVLYIISLM. The Mitochondrial matrix portion of the chain corresponds to 46–59; it reads LTTKLTHTSTMDAQ. The helical transmembrane segment at 60 to 87 threads the bilayer; sequence EVETVWTILPAVILIMIALPSLRILYMM. Over 88-227 the chain is Mitochondrial intermembrane; that stretch reads DEINNPSLTV…HFEKWSASML (140 aa). His-161, Cys-196, Glu-198, Cys-200, His-204, and Met-207 together coordinate Cu cation. Glu-198 is a binding site for Mg(2+).

It belongs to the cytochrome c oxidase subunit 2 family. In terms of assembly, component of the cytochrome c oxidase (complex IV, CIV), a multisubunit enzyme composed of 14 subunits. The complex is composed of a catalytic core of 3 subunits MT-CO1, MT-CO2 and MT-CO3, encoded in the mitochondrial DNA, and 11 supernumerary subunits COX4I, COX5A, COX5B, COX6A, COX6B, COX6C, COX7A, COX7B, COX7C, COX8 and NDUFA4, which are encoded in the nuclear genome. The complex exists as a monomer or a dimer and forms supercomplexes (SCs) in the inner mitochondrial membrane with NADH-ubiquinone oxidoreductase (complex I, CI) and ubiquinol-cytochrome c oxidoreductase (cytochrome b-c1 complex, complex III, CIII), resulting in different assemblies (supercomplex SCI(1)III(2)IV(1) and megacomplex MCI(2)III(2)IV(2)). Found in a complex with TMEM177, COA6, COX18, COX20, SCO1 and SCO2. Interacts with TMEM177 in a COX20-dependent manner. Interacts with COX20. Interacts with COX16. Requires Cu cation as cofactor.

It is found in the mitochondrion inner membrane. The catalysed reaction is 4 Fe(II)-[cytochrome c] + O2 + 8 H(+)(in) = 4 Fe(III)-[cytochrome c] + 2 H2O + 4 H(+)(out). Its function is as follows. Component of the cytochrome c oxidase, the last enzyme in the mitochondrial electron transport chain which drives oxidative phosphorylation. The respiratory chain contains 3 multisubunit complexes succinate dehydrogenase (complex II, CII), ubiquinol-cytochrome c oxidoreductase (cytochrome b-c1 complex, complex III, CIII) and cytochrome c oxidase (complex IV, CIV), that cooperate to transfer electrons derived from NADH and succinate to molecular oxygen, creating an electrochemical gradient over the inner membrane that drives transmembrane transport and the ATP synthase. Cytochrome c oxidase is the component of the respiratory chain that catalyzes the reduction of oxygen to water. Electrons originating from reduced cytochrome c in the intermembrane space (IMS) are transferred via the dinuclear copper A center (CU(A)) of subunit 2 and heme A of subunit 1 to the active site in subunit 1, a binuclear center (BNC) formed by heme A3 and copper B (CU(B)). The BNC reduces molecular oxygen to 2 water molecules using 4 electrons from cytochrome c in the IMS and 4 protons from the mitochondrial matrix. This is Cytochrome c oxidase subunit 2 (MT-CO2) from Tragelaphus imberbis (Lesser kudu).